A 280-amino-acid chain; its full sequence is uncharacterized protein (280 aa).

3 helical membrane-spanning segments follow: residues 10–29 (IQQNGILTAVITGIVALLFN), 164–186 (FVFVRWFKETLAFFVGASAFAFI), and 209–228 (IFGLSCSALYIFWIIHYFLL).

The protein localises to the cell membrane. This is an uncharacterized protein from Bacillus subtilis (strain 168).